Consider the following 589-residue polypeptide: CTP synthase (589 aa).

The interval 1–281 is amidoligase domain; that stretch reads MPQSRTHSRT…DAYVVRQLGL (281 aa). Residue Ser23 participates in CTP binding. UTP is bound at residue Ser23. ATP-binding positions include 24–29 and Asp81; that span reads SLGKGL. The Mg(2+) site is built by Asp81 and Glu155. Residues 162 to 164, 202 to 207, and Lys238 contribute to the CTP site; these read DIE and KTKPTQ. Residues 202 to 207 and Lys238 contribute to the UTP site; that span reads KTKPTQ. Residues 306–554 form the Glutamine amidotransferase type-1 domain; sequence RIALVGKYVD…VDAALRHKLE (249 aa). L-glutamine is bound at residue Gly369. Cys396 acts as the Nucleophile; for glutamine hydrolysis in catalysis. L-glutamine-binding positions include 397–400, Glu419, and Arg480; that span reads LGLQ. Residues His527 and Glu529 contribute to the active site. A disordered region spans residues 562-589; that stretch reads HGEERAAADDEIAESADRDEVASVDSAG.

It belongs to the CTP synthase family. In terms of assembly, homotetramer.

The enzyme catalyses UTP + L-glutamine + ATP + H2O = CTP + L-glutamate + ADP + phosphate + 2 H(+). The catalysed reaction is L-glutamine + H2O = L-glutamate + NH4(+). It catalyses the reaction UTP + NH4(+) + ATP = CTP + ADP + phosphate + 2 H(+). It participates in pyrimidine metabolism; CTP biosynthesis via de novo pathway; CTP from UDP: step 2/2. With respect to regulation, allosterically activated by GTP, when glutamine is the substrate; GTP has no effect on the reaction when ammonia is the substrate. The allosteric effector GTP functions by stabilizing the protein conformation that binds the tetrahedral intermediate(s) formed during glutamine hydrolysis. Inhibited by the product CTP, via allosteric rather than competitive inhibition. Catalyzes the ATP-dependent amination of UTP to CTP with either L-glutamine or ammonia as the source of nitrogen. Regulates intracellular CTP levels through interactions with the four ribonucleotide triphosphates. The chain is CTP synthase from Rhodococcus opacus (strain B4).